The chain runs to 410 residues: Sensor-like histidine kinase SenX3 (410 aa).

A run of 2 helical transmembrane segments spans residues 6–26 (ALLL…AVGM) and 46–66 (ITVS…AAVV). The 217-residue stretch at 164 to 380 (NVSHELKTPV…TFTLALPALI (217 aa)) folds into the Histidine kinase domain. Residue histidine 167 is modified to Phosphohistidine; by autocatalysis. The interval 385–410 (DDERPEQAREPELRSNRSQREEELSR) is disordered.

Post-translationally, autophosphorylated.

Its subcellular location is the cell membrane. It carries out the reaction ATP + protein L-histidine = ADP + protein N-phospho-L-histidine.. Functionally, member of the two-component regulatory system SenX3/RegX3. Autophosphorylates, and then transfers the phosphate group to RegX3. In Mycobacterium bovis (strain ATCC BAA-935 / AF2122/97), this protein is Sensor-like histidine kinase SenX3.